The sequence spans 346 residues: Dihydroorotase (346 aa).

2 residues coordinate Zn(2+): H13 and H15. Substrate contacts are provided by residues 15 to 17 (HLR) and N41. Residues K99, H136, and H174 each coordinate Zn(2+). K99 is subject to N6-carboxylysine. H136 contributes to the substrate binding site. Position 219 (L219) interacts with substrate. Residue D247 participates in Zn(2+) binding. The active site involves D247. Residues H251 and A263 each contribute to the substrate site.

The protein belongs to the metallo-dependent hydrolases superfamily. DHOase family. Class II DHOase subfamily. Homodimer. It depends on Zn(2+) as a cofactor.

It catalyses the reaction (S)-dihydroorotate + H2O = N-carbamoyl-L-aspartate + H(+). It participates in pyrimidine metabolism; UMP biosynthesis via de novo pathway; (S)-dihydroorotate from bicarbonate: step 3/3. In terms of biological role, catalyzes the reversible cyclization of carbamoyl aspartate to dihydroorotate. This chain is Dihydroorotase, found in Picosynechococcus sp. (strain ATCC 27264 / PCC 7002 / PR-6) (Agmenellum quadruplicatum).